Here is a 322-residue protein sequence, read N- to C-terminus: tRNA dimethylallyltransferase (322 aa).

G19–T26 is an ATP binding site. T21–T26 is a binding site for substrate. Interaction with substrate tRNA stretches follow at residues D44–L47, Q168–R172, and R255–R260.

Belongs to the IPP transferase family. Monomer. Mg(2+) is required as a cofactor.

The catalysed reaction is adenosine(37) in tRNA + dimethylallyl diphosphate = N(6)-dimethylallyladenosine(37) in tRNA + diphosphate. Catalyzes the transfer of a dimethylallyl group onto the adenine at position 37 in tRNAs that read codons beginning with uridine, leading to the formation of N6-(dimethylallyl)adenosine (i(6)A). This chain is tRNA dimethylallyltransferase, found in Cupriavidus taiwanensis (strain DSM 17343 / BCRC 17206 / CCUG 44338 / CIP 107171 / LMG 19424 / R1) (Ralstonia taiwanensis (strain LMG 19424)).